The chain runs to 678 residues: Penicillin-binding protein activator LpoA (678 aa).

Positions 1–26 (MVPSTFSRLKAARCLPVVLAALIFAG) are cleaved as a signal peptide. Cys-27 is lipidated: N-palmitoyl cysteine. The S-diacylglycerol cysteine moiety is linked to residue Cys-27. 2 disordered regions span residues 304-338 (AEQP…SVPV) and 495-530 (IALT…QFTN). Low complexity predominate over residues 513 to 529 (TTNNPTLQTTPTDDQFT).

It belongs to the LpoA family. Interacts with PBP1a.

It is found in the cell outer membrane. Functionally, regulator of peptidoglycan synthesis that is essential for the function of penicillin-binding protein 1A (PBP1a). The protein is Penicillin-binding protein activator LpoA of Escherichia coli O6:H1 (strain CFT073 / ATCC 700928 / UPEC).